The following is a 93-amino-acid chain: RNA silencing suppressor (93 aa).

A basic region spans residues 44–47; that stretch reads CKRR. The C4-type zinc finger occupies 54 to 69; the sequence is CWRCYRVYPPVCNSKC.

The protein belongs to the carlaviruses nucleic acid-binding protein family.

In terms of biological role, suppressor of viral-induced RNA silencing. The potential mechanism of action is based on sequestering siRNAs. This is RNA silencing suppressor from Solanum tuberosum (Potato).